The primary structure comprises 194 residues: Probable GTP-binding protein EngB (194 aa).

One can recognise an EngB-type G domain in the interval 23 to 194 (LNGEFVFVGR…YELIEIFGGV (172 aa)). Residues 31–38 (GRSNVGKS), 57–61 (GKTAS), 75–78 (DLPG), 143–146 (TKMD), and 173–175 (YSA) contribute to the GTP site. Positions 38 and 59 each coordinate Mg(2+).

The protein belongs to the TRAFAC class TrmE-Era-EngA-EngB-Septin-like GTPase superfamily. EngB GTPase family. Requires Mg(2+) as cofactor.

Functionally, necessary for normal cell division and for the maintenance of normal septation. This Thermosipho africanus (strain TCF52B) protein is Probable GTP-binding protein EngB.